Consider the following 323-residue polypeptide: UDP-galactose/UDP-glucose transporter 7 (323 aa).

The Cytoplasmic portion of the chain corresponds to 1–10; it reads MEVQAEMEPT. The chain crosses the membrane as a helical span at residues 11-31; it reads SSISLVAAVSYGIASMAMVFI. Over 32–35 the chain is Lumenal; the sequence is NKAV. A helical transmembrane segment spans residues 36–58; that stretch reads IMQYPHSMTVLTLQQLATSLLIH. Over 59–78 the chain is Cytoplasmic; it reads FGRRMGYTRAKGIDMATAKK. A helical transmembrane segment spans residues 79–97; sequence LLPVSIFYNANVAFALASL. The Lumenal portion of the chain corresponds to 98–101; it reads KGVN. The chain crosses the membrane as a helical span at residues 102–124; it reads IPMYIAIKRLTPLAVLISGVLFG. Over 125 to 132 the chain is Cytoplasmic; the sequence is KGKPTTQV. The chain crosses the membrane as a helical span at residues 133-153; the sequence is ALSVLLTAAGCVIAALGDFSF. Residue aspartate 154 is a topological domain, lumenal. A helical transmembrane segment spans residues 155–175; the sequence is LFGYGLALTSVFFQTMYLVLV. Over 176 to 186 the chain is Cytoplasmic; sequence EKSGAEDGLSS. The chain crosses the membrane as a helical span at residues 187–207; sequence IEIMFYNSFLSLPFLSILIIV. The Lumenal segment spans residues 208–226; sequence TGEFPNSLSLLLAKCSYLP. A helical membrane pass occupies residues 227 to 247; it reads FLVILILSLVMGIVLNFTMFL. The Cytoplasmic portion of the chain corresponds to 248 to 252; the sequence is CTIVN. The helical transmembrane segment at 253-275 threads the bilayer; the sequence is SALTTTIVGVLKGVGSTTLGFVL. Residues 276–278 lie on the Lumenal side of the membrane; that stretch reads LGG. The chain crosses the membrane as a helical span at residues 279–301; that stretch reads VEVHALNVSGLVVNTAGGVWYSY. The Cytoplasmic segment spans residues 302–323; it reads AKYRQKKAKPAKLMSDLEAHKK.

It belongs to the TPT transporter family. UGnT (TC 2.A.7.15) subfamily. In terms of tissue distribution, widely expressed with highest expression in roots.

It is found in the golgi apparatus membrane. In terms of biological role, nucleotide-sugar transporter that transports UDP-glucose and UDP-galactose. Plays a role in lateral root and root hair development. The sequence is that of UDP-galactose/UDP-glucose transporter 7 from Arabidopsis thaliana (Mouse-ear cress).